We begin with the raw amino-acid sequence, 628 residues long: Chaperone protein DnaK (628 aa).

Phosphothreonine; by autocatalysis is present on Thr174. Residues 589–628 are disordered; sequence AAGGAGPDMGAGAGPDMGAGASNGSAPYGDDVVDGDYKEV. A compositionally biased stretch (gly residues) spans 591–605; the sequence is GGAGPDMGAGAGPDM.

The protein belongs to the heat shock protein 70 family.

In terms of biological role, acts as a chaperone. The protein is Chaperone protein DnaK of Lachnospira eligens (strain ATCC 27750 / DSM 3376 / VPI C15-48 / C15-B4) (Eubacterium eligens).